A 305-amino-acid chain; its full sequence is Probable 4-deoxy-4-formamido-L-arabinose-phosphoundecaprenol deformylase ArnD (305 aa).

The NodB homology domain maps to 7–262 (TKVGLRIDVD…QAKENNIEFV (256 aa)).

The protein belongs to the polysaccharide deacetylase family. ArnD deformylase subfamily.

The enzyme catalyses 4-deoxy-4-formamido-alpha-L-arabinopyranosyl di-trans,octa-cis-undecaprenyl phosphate + H2O = 4-amino-4-deoxy-alpha-L-arabinopyranosyl di-trans,octa-cis-undecaprenyl phosphate + formate. It participates in glycolipid biosynthesis; 4-amino-4-deoxy-alpha-L-arabinose undecaprenyl phosphate biosynthesis; 4-amino-4-deoxy-alpha-L-arabinose undecaprenyl phosphate from UDP-4-deoxy-4-formamido-beta-L-arabinose and undecaprenyl phosphate: step 2/2. The protein operates within bacterial outer membrane biogenesis; lipopolysaccharide biosynthesis. In terms of biological role, catalyzes the deformylation of 4-deoxy-4-formamido-L-arabinose-phosphoundecaprenol to 4-amino-4-deoxy-L-arabinose-phosphoundecaprenol. The modified arabinose is attached to lipid A and is required for resistance to polymyxin and cationic antimicrobial peptides. The sequence is that of Probable 4-deoxy-4-formamido-L-arabinose-phosphoundecaprenol deformylase ArnD from Shewanella sediminis (strain HAW-EB3).